A 262-amino-acid chain; its full sequence is uncharacterized protein (262 aa).

Positions 41–118 (ELQKNEKIDK…EEKAEDFINK (78 aa)) form a coiled coil.

This is an uncharacterized protein from Plasmodium falciparum (isolate 3D7).